A 315-amino-acid chain; its full sequence is Glutamine synthetase nodule isozyme (315 aa).

Residues 19–99 form the GS beta-grasp domain; that stretch reads IIAEYIWVGG…VICDTYTPSG (81 aa). One can recognise a GS catalytic domain in the interval 106–315; that stretch reads KRHAAAKIFS…WGVANRGASI (210 aa).

It belongs to the glutamine synthetase family. In terms of assembly, homooctamer.

The protein resides in the cytoplasm. It carries out the reaction L-glutamate + NH4(+) + ATP = L-glutamine + ADP + phosphate + H(+). The sequence is that of Glutamine synthetase nodule isozyme from Lupinus angustifolius (Narrow-leaved blue lupine).